The chain runs to 452 residues: UDP-N-acetylmuramate--L-alanine ligase (452 aa).

119-125 (GAHGKTS) is an ATP binding site.

Belongs to the MurCDEF family.

The protein localises to the cytoplasm. It carries out the reaction UDP-N-acetyl-alpha-D-muramate + L-alanine + ATP = UDP-N-acetyl-alpha-D-muramoyl-L-alanine + ADP + phosphate + H(+). Its pathway is cell wall biogenesis; peptidoglycan biosynthesis. Its function is as follows. Cell wall formation. This Streptococcus mutans serotype c (strain ATCC 700610 / UA159) protein is UDP-N-acetylmuramate--L-alanine ligase.